The chain runs to 129 residues: Small ribosomal subunit protein uS11 (129 aa).

It belongs to the universal ribosomal protein uS11 family. As to quaternary structure, part of the 30S ribosomal subunit. Interacts with proteins S7 and S18. Binds to IF-3.

In terms of biological role, located on the platform of the 30S subunit, it bridges several disparate RNA helices of the 16S rRNA. Forms part of the Shine-Dalgarno cleft in the 70S ribosome. This is Small ribosomal subunit protein uS11 from Jannaschia sp. (strain CCS1).